A 385-amino-acid chain; its full sequence is Probable threonine protease PRSS50 (385 aa).

Residues 1-39 (MGRWCQTVARGQRPRTSAPSRAGALLLLLLLLRSAGCWG) form the signal peptide. Positions 93–358 (VSEGKVDPYR…YQHWIWDCLN (266 aa)) constitute a Peptidase S1 domain. An N-linked (GlcNAc...) asparagine glycan is attached at asparagine 133. Cysteine 138 and cysteine 154 are joined by a disulfide. Residues histidine 153 and aspartate 206 each act as charge relay system in the active site. 3 disulfide bridges follow: cysteine 240-cysteine 316, cysteine 273-cysteine 296, and cysteine 306-cysteine 334. Asparagine 279 carries an N-linked (GlcNAc...) asparagine glycan. The active-site Charge relay system is the threonine 310.

This sequence belongs to the peptidase S1 family. As to expression, testis specific. Differentially expressed in some breast cancer tissues.

The protein localises to the endoplasmic reticulum. In terms of biological role, may be involved in proteolysis through its threonine endopeptidase activity. This chain is Probable threonine protease PRSS50 (PRSS50), found in Homo sapiens (Human).